A 235-amino-acid polypeptide reads, in one-letter code: MKHGIQSQKVVAEVIKQKPTVRWLFLTLTVKNVYDGEELNKSLSDMAQGFRRMMQYKKINKNLVGFMRATEVTINNKDNSYNQHMHVLVCVEPTYFKNTENYVNQKQWIQFWKKAMKLDYDPNVKVQMIRPKNKYKSDIQSAIDETAKYPVKDTDFMTDDEEKNLKRLSDLEEGLHRKRLISYGGLLKEIHKKLNLDDTEEGDLIHTDDDEKADEDGFSIIAMWNWERKNYFIKE.

DNA is bound at residue Y149.

This sequence belongs to the Gram-positive plasmids replication protein type 1 family.

In terms of biological role, produces a single-strand nick in a specific site of the plasmid, and this nick results in single-strand replication by rolling circle mechanism. This is Replication protein (repB) from Bacillus sp.